The primary structure comprises 96 residues: Co-chaperonin GroES (96 aa).

The protein belongs to the GroES chaperonin family. As to quaternary structure, heptamer of 7 subunits arranged in a ring. Interacts with the chaperonin GroEL.

It localises to the cytoplasm. Functionally, together with the chaperonin GroEL, plays an essential role in assisting protein folding. The GroEL-GroES system forms a nano-cage that allows encapsulation of the non-native substrate proteins and provides a physical environment optimized to promote and accelerate protein folding. GroES binds to the apical surface of the GroEL ring, thereby capping the opening of the GroEL channel. The protein is Co-chaperonin GroES of Geotalea uraniireducens (strain Rf4) (Geobacter uraniireducens).